The primary structure comprises 107 residues: uncharacterized protein (107 aa).

One can recognise an HTH cro/C1-type domain in the interval 13–68 (LQEEFLEPLSLKISDLAQILDVHRNTASNIVNNSSRITLEMAVKLAKVFDTTPEFW). The H-T-H motif DNA-binding region spans 24-43 (KISDLAQILDVHRNTASNIV).

This sequence belongs to the VapA/VapI family.

This is an uncharacterized protein from Haemophilus influenzae (strain ATCC 51907 / DSM 11121 / KW20 / Rd).